A 366-amino-acid polypeptide reads, in one-letter code: tRNA/tmRNA (uracil-C(5))-methyltransferase (366 aa).

Gln-190, Tyr-218, Asn-223, Glu-239, and Asp-299 together coordinate S-adenosyl-L-methionine. Cys-324 serves as the catalytic Nucleophile. Glu-358 acts as the Proton acceptor in catalysis.

Belongs to the class I-like SAM-binding methyltransferase superfamily. RNA M5U methyltransferase family. TrmA subfamily.

The catalysed reaction is uridine(54) in tRNA + S-adenosyl-L-methionine = 5-methyluridine(54) in tRNA + S-adenosyl-L-homocysteine + H(+). It catalyses the reaction uridine(341) in tmRNA + S-adenosyl-L-methionine = 5-methyluridine(341) in tmRNA + S-adenosyl-L-homocysteine + H(+). Dual-specificity methyltransferase that catalyzes the formation of 5-methyluridine at position 54 (m5U54) in all tRNAs, and that of position 341 (m5U341) in tmRNA (transfer-mRNA). The chain is tRNA/tmRNA (uracil-C(5))-methyltransferase from Salmonella arizonae (strain ATCC BAA-731 / CDC346-86 / RSK2980).